We begin with the raw amino-acid sequence, 349 residues long: Uroporphyrinogen decarboxylase (349 aa).

Substrate-binding positions include Arg-23 to Arg-27, Asp-71, Tyr-148, Ser-203, and His-317.

This sequence belongs to the uroporphyrinogen decarboxylase family. Homodimer.

Its subcellular location is the cytoplasm. It carries out the reaction uroporphyrinogen III + 4 H(+) = coproporphyrinogen III + 4 CO2. It participates in porphyrin-containing compound metabolism; protoporphyrin-IX biosynthesis; coproporphyrinogen-III from 5-aminolevulinate: step 4/4. Its function is as follows. Catalyzes the decarboxylation of four acetate groups of uroporphyrinogen-III to yield coproporphyrinogen-III. The protein is Uroporphyrinogen decarboxylase of Sorangium cellulosum (strain So ce56) (Polyangium cellulosum (strain So ce56)).